The primary structure comprises 527 residues: Probable bifunctional tRNA threonylcarbamoyladenosine biosynthesis protein (527 aa).

Residues 1-323 are kae1; sequence MPDIMPDDGL…YRADEVEVAW (323 aa). Residues His110, His114, and Tyr131 each coordinate Fe cation. L-threonylcarbamoyladenylate-binding positions include 131–135, Asp163, Gly176, Glu180, and Asn256; that span reads YASGA. Residue Asp284 participates in Fe cation binding. The Protein kinase domain maps to 333 to 527; that stretch reads IGPHEGGVAR…HEVELRGRYL (195 aa). ATP contacts are provided by residues 340–348 and Lys357; that span reads VARGAEAVV. The active-site Proton acceptor; for kinase activity is Asp444.

The protein in the N-terminal section; belongs to the KAE1 / TsaD family. In the C-terminal section; belongs to the protein kinase superfamily. Tyr protein kinase family. BUD32 subfamily. Component of the KEOPS complex that consists of Kae1, Bud32, Cgi121 and Pcc1; the whole complex dimerizes. It depends on Fe(2+) as a cofactor.

The protein resides in the cytoplasm. The enzyme catalyses L-seryl-[protein] + ATP = O-phospho-L-seryl-[protein] + ADP + H(+). It carries out the reaction L-threonyl-[protein] + ATP = O-phospho-L-threonyl-[protein] + ADP + H(+). It catalyses the reaction L-threonylcarbamoyladenylate + adenosine(37) in tRNA = N(6)-L-threonylcarbamoyladenosine(37) in tRNA + AMP + H(+). Its function is as follows. Required for the formation of a threonylcarbamoyl group on adenosine at position 37 (t(6)A37) in tRNAs that read codons beginning with adenine. Is a component of the KEOPS complex that is probably involved in the transfer of the threonylcarbamoyl moiety of threonylcarbamoyl-AMP (TC-AMP) to the N6 group of A37. The Kae1 domain likely plays a direct catalytic role in this reaction. The Bud32 domain probably displays kinase activity that regulates Kae1 function. This is Probable bifunctional tRNA threonylcarbamoyladenosine biosynthesis protein from Methanoculleus marisnigri (strain ATCC 35101 / DSM 1498 / JR1).